The chain runs to 418 residues: Light-independent protochlorophyllide reductase subunit N (418 aa).

Positions 17, 42, and 103 each coordinate [4Fe-4S] cluster.

It belongs to the BchN/ChlN family. As to quaternary structure, protochlorophyllide reductase is composed of three subunits; ChlL, ChlN and ChlB. Forms a heterotetramer of two ChlB and two ChlN subunits. It depends on [4Fe-4S] cluster as a cofactor.

The enzyme catalyses chlorophyllide a + oxidized 2[4Fe-4S]-[ferredoxin] + 2 ADP + 2 phosphate = protochlorophyllide a + reduced 2[4Fe-4S]-[ferredoxin] + 2 ATP + 2 H2O. Its pathway is porphyrin-containing compound metabolism; chlorophyll biosynthesis (light-independent). Functionally, component of the dark-operative protochlorophyllide reductase (DPOR) that uses Mg-ATP and reduced ferredoxin to reduce ring D of protochlorophyllide (Pchlide) to form chlorophyllide a (Chlide). This reaction is light-independent. The NB-protein (ChlN-ChlB) is the catalytic component of the complex. In Prochlorococcus marinus (strain MIT 9211), this protein is Light-independent protochlorophyllide reductase subunit N.